The following is a 509-amino-acid chain: tRNA-2-methylthio-N(6)-dimethylallyladenosine synthase (509 aa).

Polar residues predominate over residues 1–15 (MNEQQRLASQQANSS). The segment at 1 to 25 (MNEQQRLASQQANSSTKKEEKDYSK) is disordered. Residues 16–25 (TKKEEKDYSK) are compositionally biased toward basic and acidic residues. The MTTase N-terminal domain occupies 66–184 (RKFYIRTYGC…LPYILKDAMF (119 aa)). The [4Fe-4S] cluster site is built by Cys75, Cys111, Cys145, Cys221, Cys225, and Cys228. The Radical SAM core domain occupies 207-437 (RRGDIKAWVN…NTLVNTLAIE (231 aa)). Residues 440 to 503 (SRYKGQIVEV…TWSLNGELVE (64 aa)) form the TRAM domain.

It belongs to the methylthiotransferase family. MiaB subfamily. As to quaternary structure, monomer. Requires [4Fe-4S] cluster as cofactor.

Its subcellular location is the cytoplasm. It carries out the reaction N(6)-dimethylallyladenosine(37) in tRNA + (sulfur carrier)-SH + AH2 + 2 S-adenosyl-L-methionine = 2-methylsulfanyl-N(6)-dimethylallyladenosine(37) in tRNA + (sulfur carrier)-H + 5'-deoxyadenosine + L-methionine + A + S-adenosyl-L-homocysteine + 2 H(+). Functionally, catalyzes the methylthiolation of N6-(dimethylallyl)adenosine (i(6)A), leading to the formation of 2-methylthio-N6-(dimethylallyl)adenosine (ms(2)i(6)A) at position 37 in tRNAs that read codons beginning with uridine. The protein is tRNA-2-methylthio-N(6)-dimethylallyladenosine synthase of Bacillus cereus (strain B4264).